The following is a 170-amino-acid chain: MFELTKRIDSNTQDAVFDTLTLPYELRIRGRLKAVTDNGHDVGLFLDRGPVLRNGDLLRASSGEVFSISAADEPVTTAYIENGLPLARLCYHLGNRHVSLAIGVDADGRHWIRFPPDHVLEELAILLGAQLTHHQAPFDPESGAYAHAGREQSHAHSHEHSHADGHTHAH.

Residues 137–170 (PFDPESGAYAHAGREQSHAHSHEHSHADGHTHAH) form a disordered region. Positions 148–170 (AGREQSHAHSHEHSHADGHTHAH) are enriched in basic and acidic residues.

Belongs to the UreE family.

It is found in the cytoplasm. Its function is as follows. Involved in urease metallocenter assembly. Binds nickel. Probably functions as a nickel donor during metallocenter assembly. This is Urease accessory protein UreE from Pseudoalteromonas translucida (strain TAC 125).